The sequence spans 238 residues: Dolichyldiphosphatase 1 (238 aa).

4 consecutive transmembrane segments (helical) span residues 33 to 53 (LAYL…LIIF), 100 to 120 (PSSH…FLYL), 130 to 150 (FLDL…AFLV), and 162 to 182 (WSQV…WFAF).

This sequence belongs to the dolichyldiphosphatase family.

Its subcellular location is the endoplasmic reticulum membrane. It catalyses the reaction a di-trans,poly-cis-dolichyl diphosphate + H2O = a di-trans,poly-cis-dolichyl phosphate + phosphate + H(+). The protein operates within protein modification; protein glycosylation. In terms of biological role, required for efficient N-glycosylation. Necessary for maintaining optimal levels of dolichol-linked oligosaccharides. Hydrolyzes dolichyl pyrophosphate at a very high rate and dolichyl monophosphate at a much lower rate. Does not act on phosphatidate. This Rhinolophus ferrumequinum (Greater horseshoe bat) protein is Dolichyldiphosphatase 1 (DOLPP1).